A 301-amino-acid polypeptide reads, in one-letter code: Probable alpha-L-glutamate ligase (301 aa).

In terms of domain architecture, ATP-grasp spans 104–287 (LQLLSRRGIG…VAGIIIEHIE (184 aa)). ATP contacts are provided by residues lysine 141, 178 to 179 (EY), aspartate 187, and 211 to 213 (RSN). Mg(2+) is bound by residues aspartate 248, glutamate 260, and asparagine 262. The Mn(2+) site is built by aspartate 248, glutamate 260, and asparagine 262.

This sequence belongs to the RimK family. It depends on Mg(2+) as a cofactor. Mn(2+) is required as a cofactor.

This chain is Probable alpha-L-glutamate ligase, found in Pseudomonas fluorescens (strain ATCC BAA-477 / NRRL B-23932 / Pf-5).